A 208-amino-acid chain; its full sequence is Small ribosomal subunit protein uS4 (208 aa).

The 62-residue stretch at 98-159 (RRLDNVAYRL…KSRKVAAISE (62 aa)) folds into the S4 RNA-binding domain.

Belongs to the universal ribosomal protein uS4 family. In terms of assembly, part of the 30S ribosomal subunit. Contacts protein S5. The interaction surface between S4 and S5 is involved in control of translational fidelity.

Functionally, one of the primary rRNA binding proteins, it binds directly to 16S rRNA where it nucleates assembly of the body of the 30S subunit. Its function is as follows. With S5 and S12 plays an important role in translational accuracy. This is Small ribosomal subunit protein uS4 from Citrifermentans bemidjiense (strain ATCC BAA-1014 / DSM 16622 / JCM 12645 / Bem) (Geobacter bemidjiensis).